A 316-amino-acid chain; its full sequence is PHD finger protein 20-like protein 1 (316 aa).

Positions 11–71 (ITFEIGARLE…SNRLRPLERP (61 aa)) constitute a Tudor 1 domain. Glycyl lysine isopeptide (Lys-Gly) (interchain with G-Cter in SUMO2) cross-links involve residues Lys75 and Lys79. Positions 85-141 (FDFKAGEEVLARWTDCRYYPAKIEAINKEGTFTVQFYDGVIRCLKRMHIKAMPEDAK) constitute a Tudor 2 domain. The tract at residues 183-237 (AKNKTGNKPRTSANSNKDKEKDERKWFKVPSKKEETSTSITTPEVEKKEDLPTSS) is disordered. A compositionally biased stretch (polar residues) spans 186-197 (KTGNKPRTSANS). The span at 198–218 (NKDKEKDERKWFKVPSKKEET) shows a compositional bias: basic and acidic residues.

In terms of assembly, interacts with methylated DNMT1 (DNMT1K142me1). Interacts with SOX2.

The protein resides in the nucleus. In terms of biological role, is a negative regulator of proteasomal degradation of a set of methylated proteins, including DNMT1 and SOX2. Involved in the maintainance of embryonic stem cells pluripotency, through the regulation of SOX2 levels. The polypeptide is PHD finger protein 20-like protein 1 (PHF20L1) (Bos taurus (Bovine)).